The following is a 555-amino-acid chain: Glutamine--tRNA ligase (555 aa).

Positions 35-45 match the 'HIGH' region motif; it reads PEPNGYLHIGH. Residues 36–38 and 42–48 each bind ATP; these read EPN and HIGHAKS. Residues aspartate 68 and tyrosine 213 each coordinate L-glutamine. ATP contacts are provided by residues threonine 232, 262-263, and 270-272; these read RL and MSK. The 'KMSKS' region signature appears at 269–273; it reads VMSKR.

It belongs to the class-I aminoacyl-tRNA synthetase family. In terms of assembly, monomer.

The protein localises to the cytoplasm. The catalysed reaction is tRNA(Gln) + L-glutamine + ATP = L-glutaminyl-tRNA(Gln) + AMP + diphosphate. The protein is Glutamine--tRNA ligase of Photobacterium profundum (strain SS9).